The following is a 349-amino-acid chain: Protein POOR HOMOLOGOUS SYNAPSIS 1 (349 aa).

Its subcellular location is the cytoplasm. Required for accurate chromosome segregation in meiosis. Required for pairing to occur between homologous chromosomes. Acts in early recombination steps and ensures pairing fidelity and proper repair of meiotic DNA double-strand-breaks. Regulates recombination and pairing of homologous chromosomes during meiotic prophase by controlling transport of RAD50 from cytoplasm to the nucleus. May affect pairing of the gene-rich fraction of the genome rather than preventing pairing between repetitive DNA elements. In Arabidopsis thaliana (Mouse-ear cress), this protein is Protein POOR HOMOLOGOUS SYNAPSIS 1.